Consider the following 187-residue polypeptide: uncharacterized protein (187 aa).

Residues 1-17 (MYAGGRVVRSAFARGKV) form the signal peptide. A lipid anchor (N-palmitoyl cysteine) is attached at cysteine 18. Residue cysteine 18 is the site of S-diacylglycerol cysteine attachment.

Its subcellular location is the cell membrane. This is an uncharacterized protein from Treponema pallidum (strain Nichols).